We begin with the raw amino-acid sequence, 66 residues long: ATP synthase F(0) complex subunit 8 (66 aa).

Residue Met1 is modified to N-formylmethionine. A helical transmembrane segment spans residues 8–24; that stretch reads TWLTMILSMFLTLFIIF. Lys54 bears the N6-acetyllysine; alternate mark. Position 54 is an N6-succinyllysine; alternate (Lys54). Lys57 is subject to N6-acetyllysine.

It belongs to the ATPase protein 8 family. As to quaternary structure, component of the ATP synthase complex composed at least of ATP5F1A/subunit alpha, ATP5F1B/subunit beta, ATP5MC1/subunit c (homooctomer), MT-ATP6/subunit a, MT-ATP8/subunit 8, ATP5ME/subunit e, ATP5MF/subunit f, ATP5MG/subunit g, ATP5MK/subunit k, ATP5MJ/subunit j, ATP5F1C/subunit gamma, ATP5F1D/subunit delta, ATP5F1E/subunit epsilon, ATP5PF/subunit F6, ATP5PB/subunit b, ATP5PD/subunit d, ATP5PO/subunit OSCP. ATP synthase complex consists of a soluble F(1) head domain (subunits alpha(3) and beta(3)) - the catalytic core - and a membrane F(0) domain - the membrane proton channel (subunits c, a, 8, e, f, g, k and j). These two domains are linked by a central stalk (subunits gamma, delta, and epsilon) rotating inside the F1 region and a stationary peripheral stalk (subunits F6, b, d, and OSCP). Interacts with PRICKLE3.

The protein localises to the mitochondrion membrane. Functionally, subunit 8, of the mitochondrial membrane ATP synthase complex (F(1)F(0) ATP synthase or Complex V) that produces ATP from ADP in the presence of a proton gradient across the membrane which is generated by electron transport complexes of the respiratory chain. ATP synthase complex consist of a soluble F(1) head domain - the catalytic core - and a membrane F(1) domain - the membrane proton channel. These two domains are linked by a central stalk rotating inside the F(1) region and a stationary peripheral stalk. During catalysis, ATP synthesis in the catalytic domain of F(1) is coupled via a rotary mechanism of the central stalk subunits to proton translocation. In vivo, can only synthesize ATP although its ATP hydrolase activity can be activated artificially in vitro. Part of the complex F(0) domain. This is ATP synthase F(0) complex subunit 8 from Bos taurus (Bovine).